Reading from the N-terminus, the 418-residue chain is L-rhamnose isomerase (418 aa).

Mn(2+) contacts are provided by H262, D294, and D296.

Belongs to the rhamnose isomerase family. As to quaternary structure, homotetramer. Requires Mn(2+) as cofactor.

It localises to the cytoplasm. The enzyme catalyses L-rhamnopyranose = L-rhamnulose. The protein operates within carbohydrate degradation; L-rhamnose degradation; glycerone phosphate from L-rhamnose: step 1/3. Functionally, catalyzes the interconversion of L-rhamnose and L-rhamnulose. This is L-rhamnose isomerase from Cronobacter sakazakii (strain ATCC BAA-894) (Enterobacter sakazakii).